The chain runs to 861 residues: Bifunctional uridylyltransferase/uridylyl-removing enzyme (861 aa).

Residues 1 to 321 (MKNDNRIIKN…VYHQKQKIIR (321 aa)) are uridylyltransferase. The uridylyl-removing stretch occupies residues 322 to 678 (LDDEFQLSNR…IMPHHSQGGT (357 aa)). Positions 440–562 (VDQHTLFVIR…LPHARYLDYL (123 aa)) constitute an HD domain. 2 ACT domains span residues 679–760 (EVFI…AVSR) and 788–861 (QLFL…KSKY).

It belongs to the GlnD family. Mg(2+) is required as a cofactor.

The catalysed reaction is [protein-PII]-L-tyrosine + UTP = [protein-PII]-uridylyl-L-tyrosine + diphosphate. The enzyme catalyses [protein-PII]-uridylyl-L-tyrosine + H2O = [protein-PII]-L-tyrosine + UMP + H(+). With respect to regulation, uridylyltransferase (UTase) activity is inhibited by glutamine, while glutamine activates uridylyl-removing (UR) activity. In terms of biological role, modifies, by uridylylation and deuridylylation, the PII regulatory proteins (GlnB and homologs), in response to the nitrogen status of the cell that GlnD senses through the glutamine level. Under low glutamine levels, catalyzes the conversion of the PII proteins and UTP to PII-UMP and PPi, while under higher glutamine levels, GlnD hydrolyzes PII-UMP to PII and UMP (deuridylylation). Thus, controls uridylylation state and activity of the PII proteins, and plays an important role in the regulation of nitrogen assimilation and metabolism. This Legionella pneumophila (strain Paris) protein is Bifunctional uridylyltransferase/uridylyl-removing enzyme.